The primary structure comprises 465 residues: Endo-1,3-1,4-beta-glycanase ExsH (465 aa).

3 Hemolysin-type calcium-binding repeats span residues 33–50 (HGTAGNDSMWGDSSVNVT), 105–122 (FGNEADNIIKGGSGTQTI), and 123–140 (DGRGGNDVLIGAGGADTF). One can recognise a GH16 domain in the interval 206 to 462 (AHQFRLSLDR…YIKAYSLDAD (257 aa)). Glu349 (nucleophile) is an active-site residue. Glu354 (proton donor) is an active-site residue.

It belongs to the glycosyl hydrolase 16 family.

The protein resides in the secreted. Its pathway is glycan metabolism; exopolysaccharide biosynthesis. Cleaves high molecular weight succinoglycan to yield LMW succinoglycan. Dynamically regulates the molecular weight distribution of succinoglycan by cleaving nascent succinoglycan only during a limited period after its synthesis, perhaps before it undergoes a time-dependent change in its conformation or aggregation state. The polypeptide is Endo-1,3-1,4-beta-glycanase ExsH (exsH) (Rhizobium meliloti (strain 1021) (Ensifer meliloti)).